A 197-amino-acid polypeptide reads, in one-letter code: Elongation factor Ts (197 aa).

The segment at 81–84 (TDFV) is involved in Mg(2+) ion dislocation from EF-Tu.

It belongs to the EF-Ts family.

The protein resides in the cytoplasm. In terms of biological role, associates with the EF-Tu.GDP complex and induces the exchange of GDP to GTP. It remains bound to the aminoacyl-tRNA.EF-Tu.GTP complex up to the GTP hydrolysis stage on the ribosome. This is Elongation factor Ts from Coprothermobacter proteolyticus (strain ATCC 35245 / DSM 5265 / OCM 4 / BT).